The sequence spans 296 residues: Phosphatidylserine decarboxylase proenzyme (296 aa).

Residues Asp-113, His-169, and Ser-256 each act as charge relay system; for autoendoproteolytic cleavage activity in the active site. The active-site Schiff-base intermediate with substrate; via pyruvic acid; for decarboxylase activity is Ser-256. Ser-256 carries the pyruvic acid (Ser); by autocatalysis modification.

This sequence belongs to the phosphatidylserine decarboxylase family. PSD-B subfamily. Prokaryotic type II sub-subfamily. Heterodimer of a large membrane-associated beta subunit and a small pyruvoyl-containing alpha subunit. Pyruvate is required as a cofactor. Post-translationally, is synthesized initially as an inactive proenzyme. Formation of the active enzyme involves a self-maturation process in which the active site pyruvoyl group is generated from an internal serine residue via an autocatalytic post-translational modification. Two non-identical subunits are generated from the proenzyme in this reaction, and the pyruvate is formed at the N-terminus of the alpha chain, which is derived from the carboxyl end of the proenzyme. The autoendoproteolytic cleavage occurs by a canonical serine protease mechanism, in which the side chain hydroxyl group of the serine supplies its oxygen atom to form the C-terminus of the beta chain, while the remainder of the serine residue undergoes an oxidative deamination to produce ammonia and the pyruvoyl prosthetic group on the alpha chain. During this reaction, the Ser that is part of the protease active site of the proenzyme becomes the pyruvoyl prosthetic group, which constitutes an essential element of the active site of the mature decarboxylase.

It is found in the cell membrane. The catalysed reaction is a 1,2-diacyl-sn-glycero-3-phospho-L-serine + H(+) = a 1,2-diacyl-sn-glycero-3-phosphoethanolamine + CO2. Its pathway is phospholipid metabolism; phosphatidylethanolamine biosynthesis; phosphatidylethanolamine from CDP-diacylglycerol: step 2/2. In terms of biological role, catalyzes the formation of phosphatidylethanolamine (PtdEtn) from phosphatidylserine (PtdSer). The sequence is that of Phosphatidylserine decarboxylase proenzyme from Clostridium kluyveri (strain ATCC 8527 / DSM 555 / NBRC 12016 / NCIMB 10680 / K1).